The sequence spans 573 residues: Urease subunit alpha (573 aa).

Residues 136 to 573 (GAIDCHVHFI…LPMAQRYFLF (438 aa)) form the Urease domain. Ni(2+) is bound by residues H141, H143, and K224. The residue at position 224 (K224) is an N6-carboxylysine. H226 provides a ligand contact to substrate. Residues H253 and H279 each contribute to the Ni(2+) site. Residue H327 is the Proton donor of the active site. D367 is a binding site for Ni(2+).

This sequence belongs to the metallo-dependent hydrolases superfamily. Urease alpha subunit family. Heterotrimer of UreA (gamma), UreB (beta) and UreC (alpha) subunits. Three heterotrimers associate to form the active enzyme. The cofactor is Ni cation. Carboxylation allows a single lysine to coordinate two nickel ions.

Its subcellular location is the cytoplasm. The catalysed reaction is urea + 2 H2O + H(+) = hydrogencarbonate + 2 NH4(+). It functions in the pathway nitrogen metabolism; urea degradation; CO(2) and NH(3) from urea (urease route): step 1/1. The chain is Urease subunit alpha from Nocardia farcinica (strain IFM 10152).